A 457-amino-acid polypeptide reads, in one-letter code: Siroheme synthase (457 aa).

The tract at residues 4–202 (LPIFCQLRDR…ANADEKAVNA (199 aa)) is precorrin-2 dehydrogenase /sirohydrochlorin ferrochelatase. Residues 22–23 (DV) and 43–44 (LT) contribute to the NAD(+) site. Serine 128 is subject to Phosphoserine. A uroporphyrinogen-III C-methyltransferase region spans residues 216 to 448 (GEVVLVGAGP…IIVGRVVALR (233 aa)). Proline 225 provides a ligand contact to S-adenosyl-L-methionine. The Proton acceptor role is filled by aspartate 248. The active-site Proton donor is the lysine 270. S-adenosyl-L-methionine is bound by residues 301-303 (GGD), isoleucine 306, 331-332 (TA), methionine 382, glycine 411, and alanine 437.

This sequence in the N-terminal section; belongs to the precorrin-2 dehydrogenase / sirohydrochlorin ferrochelatase family. It in the C-terminal section; belongs to the precorrin methyltransferase family. Homodimer.

The catalysed reaction is uroporphyrinogen III + 2 S-adenosyl-L-methionine = precorrin-2 + 2 S-adenosyl-L-homocysteine + H(+). It catalyses the reaction precorrin-2 + NAD(+) = sirohydrochlorin + NADH + 2 H(+). It carries out the reaction siroheme + 2 H(+) = sirohydrochlorin + Fe(2+). It participates in cofactor biosynthesis; adenosylcobalamin biosynthesis; precorrin-2 from uroporphyrinogen III: step 1/1. The protein operates within cofactor biosynthesis; adenosylcobalamin biosynthesis; sirohydrochlorin from precorrin-2: step 1/1. It functions in the pathway porphyrin-containing compound metabolism; siroheme biosynthesis; precorrin-2 from uroporphyrinogen III: step 1/1. Its pathway is porphyrin-containing compound metabolism; siroheme biosynthesis; siroheme from sirohydrochlorin: step 1/1. It participates in porphyrin-containing compound metabolism; siroheme biosynthesis; sirohydrochlorin from precorrin-2: step 1/1. Multifunctional enzyme that catalyzes the SAM-dependent methylations of uroporphyrinogen III at position C-2 and C-7 to form precorrin-2 via precorrin-1. Then it catalyzes the NAD-dependent ring dehydrogenation of precorrin-2 to yield sirohydrochlorin. Finally, it catalyzes the ferrochelation of sirohydrochlorin to yield siroheme. This chain is Siroheme synthase, found in Salmonella typhimurium (strain LT2 / SGSC1412 / ATCC 700720).